The sequence spans 75 residues: Small ribosomal subunit protein bS18 (75 aa).

It belongs to the bacterial ribosomal protein bS18 family. As to quaternary structure, part of the 30S ribosomal subunit. Forms a tight heterodimer with protein bS6.

Its function is as follows. Binds as a heterodimer with protein bS6 to the central domain of the 16S rRNA, where it helps stabilize the platform of the 30S subunit. This chain is Small ribosomal subunit protein bS18, found in Acinetobacter baumannii (strain AB307-0294).